The sequence spans 115 residues: Large ribosomal subunit protein bL20 (115 aa).

Belongs to the bacterial ribosomal protein bL20 family.

In terms of biological role, binds directly to 23S ribosomal RNA and is necessary for the in vitro assembly process of the 50S ribosomal subunit. It is not involved in the protein synthesizing functions of that subunit. The sequence is that of Large ribosomal subunit protein bL20 from Chlorobium limicola (strain DSM 245 / NBRC 103803 / 6330).